The sequence spans 198 residues: Alkyl hydroperoxide reductase C (198 aa).

The region spanning 2-163 is the Thioredoxin domain; that stretch reads TLVTQKAPNF…MIRMIDALNF (162 aa). Residue Cys-50 is the Cysteine sulfenic acid (-SOH) intermediate of the active site.

This sequence belongs to the peroxiredoxin family. AhpC/Prx1 subfamily. In terms of assembly, homodimer; disulfide-linked, upon oxidation. 5 homodimers assemble to form a ring-like decamer.

Its subcellular location is the cytoplasm. It carries out the reaction a hydroperoxide + NADH + H(+) = an alcohol + NAD(+) + H2O. Its function is as follows. Thiol-specific peroxidase that catalyzes the reduction of hydrogen peroxide and organic hydroperoxides to water and alcohols, respectively. Plays a role in cell protection against oxidative stress by detoxifying peroxides. In Buchnera aphidicola subsp. Schizaphis graminum (strain Sg), this protein is Alkyl hydroperoxide reductase C.